The sequence spans 485 residues: Benzaldehyde dehydrogenase YfmT (485 aa).

Residue 231–236 coordinates NAD(+); the sequence is GSTKVG. Residues Glu253 and Cys287 contribute to the active site.

Belongs to the aldehyde dehydrogenase family.

It carries out the reaction benzaldehyde + NAD(+) + H2O = benzoate + NADH + 2 H(+). The catalysed reaction is vanillin + NAD(+) + H2O = vanillate + NADH + 2 H(+). In terms of biological role, a benzaldehyde dehydrogenase able to act on substrates with 3- and 4-hydroxy and methoxy substitutions; converts vanillin (4-hydroxy-3-methoxybenzaldehyde) to vanillic acid in vitro. The physiological substrate is unknown. This is Benzaldehyde dehydrogenase YfmT (yfmT) from Bacillus subtilis (strain 168).